Reading from the N-terminus, the 192-residue chain is Shikimate kinase (192 aa).

26–31 contributes to the ATP binding site; it reads ASGKSS. Serine 30 contributes to the Mg(2+) binding site. Residues aspartate 48, arginine 72, and glycine 94 each coordinate substrate. Arginine 132 contacts ATP. Arginine 151 contributes to the substrate binding site.

Belongs to the shikimate kinase family. Monomer. Mg(2+) serves as cofactor.

The protein resides in the cytoplasm. The enzyme catalyses shikimate + ATP = 3-phosphoshikimate + ADP + H(+). It participates in metabolic intermediate biosynthesis; chorismate biosynthesis; chorismate from D-erythrose 4-phosphate and phosphoenolpyruvate: step 5/7. Its function is as follows. Catalyzes the specific phosphorylation of the 3-hydroxyl group of shikimic acid using ATP as a cosubstrate. This is Shikimate kinase from Prochlorococcus marinus (strain MIT 9313).